A 355-amino-acid polypeptide reads, in one-letter code: Dihydroorotate dehydrogenase (quinone) (355 aa).

FMN contacts are provided by residues 68–72 and Thr92; that span reads AGFDK. Lys72 contributes to the substrate binding site. 117–121 contributes to the substrate binding site; that stretch reads NRMGF. FMN is bound by residues Asn154 and Asn190. Residue Asn190 coordinates substrate. Ser193 serves as the catalytic Nucleophile. Asn195 is a substrate binding site. Residues Lys232 and Thr260 each contribute to the FMN site. Substrate is bound at residue 261 to 262; it reads NT. Residues Gly286, Gly315, and 336–337 contribute to the FMN site; that span reads YS.

The protein belongs to the dihydroorotate dehydrogenase family. Type 2 subfamily. In terms of assembly, monomer. The cofactor is FMN.

It is found in the cell membrane. The catalysed reaction is (S)-dihydroorotate + a quinone = orotate + a quinol. The protein operates within pyrimidine metabolism; UMP biosynthesis via de novo pathway; orotate from (S)-dihydroorotate (quinone route): step 1/1. Catalyzes the conversion of dihydroorotate to orotate with quinone as electron acceptor. This chain is Dihydroorotate dehydrogenase (quinone), found in Nocardioides sp. (strain ATCC BAA-499 / JS614).